We begin with the raw amino-acid sequence, 1839 residues long: Mannuronan C5-epimerase AlgE3 (1839 aa).

PbH1 repeat units follow at residues 133 to 155, 157 to 179, 180 to 202, 204 to 226, 257 to 279, 280 to 302, 320 to 342, and 347 to 369; these read DRDV…DPHE, TINL…VADY, QVGG…NIVT, TNDF…VVQR, THDV…RVYG, AQDV…YAEV, TTGT…GIQE, and TDYS…RLYG. Over residues 372-386 the composition is skewed to polar residues; that stretch reads STVSEQPSSGQQATL. Residues 372–392 form a disordered region; the sequence is STVSEQPSSGQQATLEGTAGN. 9 Hemolysin-type calcium-binding repeats span residues 387-399, 406-422, 424-440, 538-550, 557-573, 574-591, 695-709, 714-730, and 732-748; these read EGTA…SGTG, GLAG…DDTL, GGAG…ADTF, TGTE…SGTD, GYGG…NDIL, VGGA…ADVF, EGTD…TGAD, GLGG…DDVL, and GGAE…ADTF. PbH1 repeat units lie at residues 975 to 997, 999 to 1021, 1022 to 1044, 1046 to 1068, 1099 to 1121, 1122 to 1143, 1161 to 1183, and 1188 to 1210; these read DRNV…DPHE, TINL…VADY, LVDS…NVVT, TYDF…VIQR, TNNI…RLYG, TEDV…AYAE, TTGT…GIEE, and TDYS…RLNG. Residues 1215-1236 are compositionally biased toward polar residues; it reads VSDQPGTGQQATLEGTTGNDTL. Positions 1215–1238 are disordered; that stretch reads VSDQPGTGQQATLEGTTGNDTLGG. Hemolysin-type calcium-binding repeat units lie at residues 1229 to 1243, 1247 to 1263, 1265 to 1281, 1398 to 1414, 1415 to 1432, 1536 to 1552, 1554 to 1571, 1670 to 1681, 1688 to 1704, and 1706 to 1722; these read GTTG…DAHE, GLDG…NDIL, GGVG…ADTF, GHAG…DDIL, VGGA…ADVF, EGTA…ADEV, HGGS…ADVF, GGDGNDTLSGGS, GGAG…NDIL, and GGAG…SDIF.

This sequence belongs to the D-mannuronate C5-epimerase family. Ca(2+) is required as a cofactor.

Its subcellular location is the secreted. The enzyme catalyses [(1-&gt;4)-beta-D-mannuronosyl](n) = [alginate](n). The protein operates within glycan biosynthesis; alginate biosynthesis. With respect to regulation, inhibited by zinc. In terms of biological role, converts beta-D-mannuronic acid (M) to alpha-L-guluronic acid (G), producing a polymer with gel-forming capacity, required for the formation of the cyst coat. The polypeptide is Mannuronan C5-epimerase AlgE3 (Azotobacter vinelandii).